We begin with the raw amino-acid sequence, 307 residues long: MATITAAMVKDLRETTGVGMMDCKQALTENDGDMQAAIDWLRKKGLSKAAKKAGRVAAEGLIGAVTSGNKGVVVEVNSETDFVARNEQFQGLVKMVAQVALSVGADVEVIKAAKVGSATVETAISDAIATIGENMTLRRAASLEVSKGLVASYVHNAVIDGAGKMGVIVALESSGNADELAALGRQIAMHVASSNPLAIDPSGVDPAVVKREKDILADKFRQQGKPEAMIEKITESGLKTFFKEQTLLEQPFIFDDKKSVGQALKDAEGKVGAPVKLTGFVRYALGEGIEKAESDFAAEVAAAAGQG.

An involved in Mg(2+) ion dislocation from EF-Tu region spans residues 80–83 (TDFV).

This sequence belongs to the EF-Ts family.

The protein resides in the cytoplasm. Associates with the EF-Tu.GDP complex and induces the exchange of GDP to GTP. It remains bound to the aminoacyl-tRNA.EF-Tu.GTP complex up to the GTP hydrolysis stage on the ribosome. The polypeptide is Elongation factor Ts (Nitrobacter hamburgensis (strain DSM 10229 / NCIMB 13809 / X14)).